The primary structure comprises 393 residues: NAD(P)H-quinone oxidoreductase subunit H, chloroplastic (393 aa).

This sequence belongs to the complex I 49 kDa subunit family. NDH is composed of at least 16 different subunits, 5 of which are encoded in the nucleus.

It is found in the plastid. Its subcellular location is the chloroplast thylakoid membrane. The catalysed reaction is a plastoquinone + NADH + (n+1) H(+)(in) = a plastoquinol + NAD(+) + n H(+)(out). The enzyme catalyses a plastoquinone + NADPH + (n+1) H(+)(in) = a plastoquinol + NADP(+) + n H(+)(out). NDH shuttles electrons from NAD(P)H:plastoquinone, via FMN and iron-sulfur (Fe-S) centers, to quinones in the photosynthetic chain and possibly in a chloroplast respiratory chain. The immediate electron acceptor for the enzyme in this species is believed to be plastoquinone. Couples the redox reaction to proton translocation, and thus conserves the redox energy in a proton gradient. This Panax ginseng (Korean ginseng) protein is NAD(P)H-quinone oxidoreductase subunit H, chloroplastic.